Reading from the N-terminus, the 287-residue chain is uncharacterized protein (287 aa).

Disordered stretches follow at residues Gln109–Asp175, Ile203–Val223, and Lys257–Glu287. Positions Glu110–Pro136 are enriched in low complexity. A compositionally biased stretch (basic and acidic residues) spans Arg143 to Lys152. The segment covering Glu153–Asn162 has biased composition (basic residues). Residues Ser273–Glu287 are compositionally biased toward basic and acidic residues.

This sequence belongs to the chlamydial CPn_0623/CT_504/TC_0791 family.

This is an uncharacterized protein from Chlamydia muridarum (strain MoPn / Nigg).